Here is a 349-residue protein sequence, read N- to C-terminus: Phosphoribosylformylglycinamidine cyclo-ligase (349 aa).

The protein belongs to the AIR synthase family.

Its subcellular location is the cytoplasm. The catalysed reaction is 2-formamido-N(1)-(5-O-phospho-beta-D-ribosyl)acetamidine + ATP = 5-amino-1-(5-phospho-beta-D-ribosyl)imidazole + ADP + phosphate + H(+). It functions in the pathway purine metabolism; IMP biosynthesis via de novo pathway; 5-amino-1-(5-phospho-D-ribosyl)imidazole from N(2)-formyl-N(1)-(5-phospho-D-ribosyl)glycinamide: step 2/2. The sequence is that of Phosphoribosylformylglycinamidine cyclo-ligase from Methanococcus maripaludis (strain C7 / ATCC BAA-1331).